The chain runs to 204 residues: Protein phosphatase 1 regulatory subunit 1B (204 aa).

N-acetylmethionine is present on Met1. Residues 1-204 form a disordered region; the sequence is MDPKDRKKIQ…QRPSPSEPGT (204 aa). Phosphothreonine; by PKA is present on Thr34. A compositionally biased stretch (basic and acidic residues) spans 41-63; it reads LSEHSSPEEEASPHQRASGEGHH. Ser45 and Ser46 each carry phosphoserine. Thr75 carries the phosphothreonine; by CDK5 modification. Residues 89 to 100 show a composition bias toward polar residues; sequence HLQSISNLNENQ. At Ser102 the chain carries Phosphoserine. A compositionally biased stretch (basic and acidic residues) spans 109–118; that stretch reads GELRELGYPR. Acidic residues-rich tracts occupy residues 119–138 and 170–183; these read EEDE…EDSQ and DESE…DQVE. Ser137 carries the post-translational modification Phosphoserine. Ser198 is modified (phosphoserine).

This sequence belongs to the protein phosphatase inhibitor 1 family. Dopamine- and cyclic AMP-regulated neuronal phosphoprotein. In terms of processing, phosphorylation of Thr-34 is required for activity.

Its subcellular location is the cytoplasm. Its function is as follows. Inhibitor of protein-phosphatase 1. The sequence is that of Protein phosphatase 1 regulatory subunit 1B (PPP1R1B) from Homo sapiens (Human).